The primary structure comprises 388 residues: Succinate--CoA ligase [ADP-forming] subunit beta (388 aa).

The ATP-grasp domain maps to 9–244; it reads KSLFAEYGLP…PSQDDAREAH (236 aa). ATP-binding positions include lysine 46, 53–55, glutamate 99, threonine 102, and glutamate 107; that span reads GRG. Residues asparagine 199 and aspartate 213 each coordinate Mg(2+). Substrate contacts are provided by residues asparagine 264 and 321 to 323; that span reads GIV.

It belongs to the succinate/malate CoA ligase beta subunit family. In terms of assembly, heterotetramer of two alpha and two beta subunits. The cofactor is Mg(2+).

The catalysed reaction is succinate + ATP + CoA = succinyl-CoA + ADP + phosphate. It catalyses the reaction GTP + succinate + CoA = succinyl-CoA + GDP + phosphate. It functions in the pathway carbohydrate metabolism; tricarboxylic acid cycle; succinate from succinyl-CoA (ligase route): step 1/1. In terms of biological role, succinyl-CoA synthetase functions in the citric acid cycle (TCA), coupling the hydrolysis of succinyl-CoA to the synthesis of either ATP or GTP and thus represents the only step of substrate-level phosphorylation in the TCA. The beta subunit provides nucleotide specificity of the enzyme and binds the substrate succinate, while the binding sites for coenzyme A and phosphate are found in the alpha subunit. The polypeptide is Succinate--CoA ligase [ADP-forming] subunit beta (Shewanella woodyi (strain ATCC 51908 / MS32)).